The primary structure comprises 191 residues: Ribonuclease M5 1 (191 aa).

One can recognise a Toprim domain in the interval 10 to 93 (KEVIVVEGKD…AFLTKHDAAP (84 aa)). 3 residues coordinate Mg(2+): Glu16, Asp62, and Asp64.

This sequence belongs to the ribonuclease M5 family. The cofactor is Mg(2+).

The protein resides in the cytoplasm. It catalyses the reaction Endonucleolytic cleavage of RNA, removing 21 and 42 nucleotides, respectively, from the 5'- and 3'-termini of a 5S-rRNA precursor.. Required for correct processing of both the 5' and 3' ends of 5S rRNA precursor. Cleaves both sides of a double-stranded region yielding mature 5S rRNA in one step. This is Ribonuclease M5 1 from Ligilactobacillus salivarius (strain CECT 5713) (Lactobacillus salivarius).